The sequence spans 243 residues: Small ribosomal subunit protein uS3 (243 aa).

Residues 39 to 110 enclose the KH type-2 domain; the sequence is IRTFIQKKYS…QVRINVVEVE (72 aa). Positions 221-243 are disordered; it reads GAIPRRKGSRKPQQFEDRSNENS. Positions 233–243 are enriched in basic and acidic residues; that stretch reads QQFEDRSNENS.

This sequence belongs to the universal ribosomal protein uS3 family. In terms of assembly, part of the 30S ribosomal subunit. Forms a tight complex with proteins S10 and S14.

In terms of biological role, binds the lower part of the 30S subunit head. Binds mRNA in the 70S ribosome, positioning it for translation. The sequence is that of Small ribosomal subunit protein uS3 from Prochlorococcus marinus subsp. pastoris (strain CCMP1986 / NIES-2087 / MED4).